A 1004-amino-acid polypeptide reads, in one-letter code: 2-oxoglutarate dehydrogenase E1 component (1004 aa).

This sequence belongs to the alpha-ketoglutarate dehydrogenase family. In terms of assembly, homodimer. Part of the 2-oxoglutarate dehydrogenase (OGDH) complex composed of E1 (2-oxoglutarate dehydrogenase), E2 (dihydrolipoamide succinyltransferase) and E3 (dihydrolipoamide dehydrogenase); the complex contains multiple copies of the three enzymatic components (E1, E2 and E3). Requires thiamine diphosphate as cofactor.

It carries out the reaction N(6)-[(R)-lipoyl]-L-lysyl-[protein] + 2-oxoglutarate + H(+) = N(6)-[(R)-S(8)-succinyldihydrolipoyl]-L-lysyl-[protein] + CO2. In terms of biological role, E1 component of the 2-oxoglutarate dehydrogenase (OGDH) complex which catalyzes the decarboxylation of 2-oxoglutarate, the first step in the conversion of 2-oxoglutarate to succinyl-CoA and CO(2). The polypeptide is 2-oxoglutarate dehydrogenase E1 component (Brucella ovis (strain ATCC 25840 / 63/290 / NCTC 10512)).